Here is a 716-residue protein sequence, read N- to C-terminus: Macrophage-expressed gene 1 protein (716 aa).

An N-terminal signal peptide occupies residues 1–20; that stretch reads MNNFRATILFWAVAAWVTSG. Residues 30–345 enclose the MACPF domain; the sequence is GVQKCKNALK…TAVKRYYTFN (316 aa). A disulfide bond links C34 and C70. Transmembrane regions (beta stranded) follow at residues 113–120 and 127–132; these read YSINTELS and GKFSTE. N168 and N185 each carry an N-linked (GlcNAc...) asparagine glycan. The next 2 membrane-spanning stretches (beta stranded) occupy residues 235–244 and 248–256; these read AVTASAGLAF and VNFKFEENY. The N-linked (GlcNAc...) asparagine glycan is linked to N269. C350 and C369 are disulfide-bonded. The N-linked (GlcNAc...) asparagine glycan is linked to N375. Cystine bridges form between C385–C397, C435–C449, C439–C445, C534–C572, and C557–C577. Residues 413–656 form a P2 region; sequence PSGYSPVRLL…GDGGGLSGGA (244 aa). Residues 656–676 form a helical membrane-spanning segment; sequence AAAGVTLGVTTILAVVITLAI. Residues 693–716 are disordered; sequence RQSLVPGTAATGDTTYQEQGQSPA. Residues 703–716 are compositionally biased toward polar residues; the sequence is TGDTTYQEQGQSPA.

The protein belongs to the MPEG1 family. Homooligomer; predominantly forms a homooligomeric arc-shaped pore complex instead of complete rings of 16 subunits. In terms of processing, proteolytically processed in two steps to generate the Macrophage-expressed gene 1 protein, processed form: cleaved by trypsin in proximity of the helical transmembrane domain releases the ectodomain into the lysosomal lumen to orient the pore-forming domain toward the endogenous membranes, and processed by the asparagine endopeptidase (LGMN). Proteolytic processing in antigen-containing vesicles is pH-dependent. Monoubiquitinated in response to bacterial infection; ubiquitination is required for vesicular localization and antibacterial activity and can be blocked by bacterial cell cycle inhibiting factor (cif).

It localises to the cytoplasmic vesicle membrane. The protein resides in the cytoplasmic vesicle. It is found in the phagosome membrane. With respect to regulation, forms arc- and ring-shaped pre-pores on top of the membrane at neutral to slightly acidic pH conditions and converts to pores upon acidification. Undergoes transition from the pre-pore to the pore in a processive clockwise hand-over-hand process. In the pore state, 2 alpha-helical regions refold into transmembrane hairpins (TMH1 and TMH2) in each protomer that form in the ensemble complex giant beta-barrel transmembrane pores. Its function is as follows. Pore-forming protein involved in both innate and adaptive immunity. Plays a central role in antigen cross-presentation in dendritic cells by forming a pore in antigen-containing compartments, thereby promoting delivery of antigens for cross-presentation. Also involved in innate immune response following bacterial infection; shows antibacterial activity against a wide spectrum of Gram-positive, Gram-negative and acid-fast bacteria. Reduces the viability of the intracytosolic pathogen L.monocytogenes by inhibiting acidification of the phagocytic vacuole of host cells which restricts bacterial translocation from the vacuole to the cytosol. Required for the antibacterial activity of reactive oxygen species and nitric oxide. Pore-forming protein that plays a central role in antigen cross-presentation in dendritic cells by mediating delivery of antigens for cross-presentation. Dendritic cells bridge innate and adaptive immunity by capturing exogenous antigens on MHC class-I molecules and presenting them to naive CD8(+) T-cells. Acts by forming a pore in antigen-containing compartments, promoting the release of antigens into the cytosol, enabling generation of MHCI:peptide complexes and T-cell priming. This Pongo abelii (Sumatran orangutan) protein is Macrophage-expressed gene 1 protein (MPEG1).